The primary structure comprises 627 residues: Glycerophosphodiester phosphodiesterase domain-containing protein 4 (627 aa).

Residues 1-17 (MLLFLWIETSNEYFNFD) are Cytoplasmic-facing. Residues 18–38 (WVIFLGTGYWFYWSIFILSLA) form a helical membrane-spanning segment. Residue glycine 39 is a topological domain, extracellular. A helical transmembrane segment spans residues 40 to 60 (ILTAYSSLLLLLGLLLLWEGI). At 61–69 (ELYLHLCHK) the chain is on the cytoplasmic side. Residues 70-90 (ILILLVILPCVILMFIICKFW) form a helical membrane-spanning segment. Residues 91–107 (KERWLVAGLSLQIFAPY) are Extracellular-facing. The chain crosses the membrane as a helical span at residues 108–128 (VHLVSITVMVILFWPVAIYVA). At 129–162 (RLEREVRMRRYRMTHSEKKRLKKCNVIARLRGLQ) the chain is on the cytoplasmic side. Residues 163–183 (VAVGLPFLLIFLSLCLMPLGI) traverse the membrane as a helical segment. Topologically, residues 184-468 (YSPCIQEKEN…PHFFMTPKFY (285 aa)) are extracellular. Residues 198–457 (PTLFGHRGAP…DNIGLLSQLN (260 aa)) form the GP-PDE domain. 3 residues coordinate a divalent metal cation: glutamate 230, aspartate 232, and histidine 245. N-linked (GlcNAc...) asparagine glycans are attached at residues asparagine 308 and asparagine 397. Residues 469 to 489 (MFIWLLVDIISVLFIVAIFCF) traverse the membrane as a helical segment. Over 490-627 (HWRRETIKEK…TMPSVEVPYP (138 aa)) the chain is Cytoplasmic.

Belongs to the glycerophosphoryl diester phosphodiesterase family.

Its subcellular location is the membrane. This Macaca fascicularis (Crab-eating macaque) protein is Glycerophosphodiester phosphodiesterase domain-containing protein 4 (GDPD4).